Reading from the N-terminus, the 223-residue chain is uncharacterized protein (223 aa).

Positions 1 to 11 (MLWVQRKRRRK) are enriched in basic residues. The interval 1 to 37 (MLWVQRKRRRKETSECPSDKDKSPESHKAKNESWIKS) is disordered. The segment covering 12–37 (ETSECPSDKDKSPESHKAKNESWIKS) has biased composition (basic and acidic residues). Position 43 is a phosphoserine (S43). Disordered stretches follow at residues 49–73 (LDNN…SSTV) and 196–223 (THTF…NRRH). Over residues 51–61 (NNASASGNATQ) the composition is skewed to polar residues. The segment covering 62–73 (TESGSEEVSSTV) has biased composition (low complexity). A compositionally biased stretch (basic residues) spans 202-223 (HSHHSHHGHPSHQSHSLPNRRH).

This is an uncharacterized protein from Homo sapiens (Human).